Consider the following 273-residue polypeptide: MSEAGDMGLVVVGAAGRMGQTLIRAIHTIPGARVIGAVERADSPHLGKDAGELAGIGIINVPIGDDPLPVFAKADGVLDFTTPASSVEFAGYAAQARIVHVIGTTGCSADDNARIAAAARHATIVKSGNMSLGVNLLAVLVEQAARALDADDFDIEILEMHHKHKVDAPSGTALLLGEAAAAGRGIALAGNDVRSRDGHTGVRKTGSIGFATLRGGSVVGDHSVILAGTGERITLSHHAEDRAIFARGAVKAALWARGKKPGLYSMRDVLGLS.

NAD(+)-binding positions include 13 to 18 (GAAGRM) and E39. NADP(+) is bound at residue R40. NAD(+) is bound by residues 103-105 (GTT) and 127-130 (SGNM). Residue H161 is the Proton donor/acceptor of the active site. A (S)-2,3,4,5-tetrahydrodipicolinate-binding site is contributed by H162. K165 acts as the Proton donor in catalysis. Residue 171 to 172 (GT) participates in (S)-2,3,4,5-tetrahydrodipicolinate binding.

The protein belongs to the DapB family.

It localises to the cytoplasm. It carries out the reaction (S)-2,3,4,5-tetrahydrodipicolinate + NAD(+) + H2O = (2S,4S)-4-hydroxy-2,3,4,5-tetrahydrodipicolinate + NADH + H(+). The catalysed reaction is (S)-2,3,4,5-tetrahydrodipicolinate + NADP(+) + H2O = (2S,4S)-4-hydroxy-2,3,4,5-tetrahydrodipicolinate + NADPH + H(+). Its pathway is amino-acid biosynthesis; L-lysine biosynthesis via DAP pathway; (S)-tetrahydrodipicolinate from L-aspartate: step 4/4. Catalyzes the conversion of 4-hydroxy-tetrahydrodipicolinate (HTPA) to tetrahydrodipicolinate. The sequence is that of 4-hydroxy-tetrahydrodipicolinate reductase 1 from Mesorhizobium japonicum (strain LMG 29417 / CECT 9101 / MAFF 303099) (Mesorhizobium loti (strain MAFF 303099)).